Consider the following 220-residue polypeptide: tRNA (guanine-N(7)-)-methyltransferase (220 aa).

Residues Glu-44, Glu-69, Asp-96, and Asp-118 each contribute to the S-adenosyl-L-methionine site. Asp-118 is a catalytic residue. A substrate-binding site is contributed by Lys-122. The segment at 124 to 129 (RHEKRR) is interaction with RNA. Residues Asp-154 and 191–194 (TEYE) each bind substrate.

This sequence belongs to the class I-like SAM-binding methyltransferase superfamily. TrmB family.

It catalyses the reaction guanosine(46) in tRNA + S-adenosyl-L-methionine = N(7)-methylguanosine(46) in tRNA + S-adenosyl-L-homocysteine. It functions in the pathway tRNA modification; N(7)-methylguanine-tRNA biosynthesis. Catalyzes the formation of N(7)-methylguanine at position 46 (m7G46) in tRNA. The chain is tRNA (guanine-N(7)-)-methyltransferase from Halalkalibacterium halodurans (strain ATCC BAA-125 / DSM 18197 / FERM 7344 / JCM 9153 / C-125) (Bacillus halodurans).